The following is a 446-amino-acid chain: Solute carrier family 52, riboflavin transporter, member 2 (446 aa).

The next 4 membrane-spanning stretches (helical) occupy residues 14-34 (LLVA…WVEL), 47-67 (LPSY…VVTL), 79-99 (APIQ…APLW), and 104-124 (VMAG…LALA). A glycan (N-linked (GlcNAc...) asparagine) is linked at Asn-129. The next 2 helical transmembrane spans lie at 147-167 (FFLG…GQGV) and 196-216 (FFGA…GLLL). A disordered region spans residues 228–267 (GSGTGLRGGAPGVEEEEEEEASPLQEPPSQAAGNTPSPDP). Gly residues predominate over residues 229–238 (SGTGLRGGAP). Positions 254–263 (PPSQAAGNTP) are enriched in polar residues. The next 5 helical transmembrane spans lie at 278-298 (ACLL…LPAV), 313-333 (LAVV…MGIL), 340-360 (LGGL…LAIL), 367-387 (VGTS…LGVF), and 405-425 (ALLA…VTMF).

It belongs to the riboflavin transporter family.

The protein localises to the cell membrane. It carries out the reaction riboflavin(in) = riboflavin(out). With respect to regulation, riboflavin transport is Na(+)-independent but moderately pH-sensitive. Activity is strongly inhibited by riboflavin analogs, such as lumiflavin. Weakly inhibited by flavin adenine dinucleotide (FAD) and flavin mononucleotide (FMN). In terms of biological role, plasma membrane transporter mediating the uptake by cells of the water soluble vitamin B2/riboflavin that plays a key role in biochemical oxidation-reduction reactions of the carbohydrate, lipid, and amino acid metabolism. May also act as a receptor for 4-hydroxybutyrate. Functionally, (Microbial infection) In case of infection by porcine endogenous retrovirus (PERV-A), acts as a cell receptor to retroviral envelopes. The sequence is that of Solute carrier family 52, riboflavin transporter, member 2 (SLC52A2) from Sus scrofa (Pig).